The primary structure comprises 185 residues: NADH-quinone oxidoreductase subunit B (185 aa).

The [4Fe-4S] cluster site is built by C38, C39, C104, and C133. Residues 165-176 show a composition bias toward basic and acidic residues; it reads AAEAYREEERQA. Residues 165–185 form a disordered region; it reads AAEAYREEERQAARSALGPRS.

This sequence belongs to the complex I 20 kDa subunit family. As to quaternary structure, NDH-1 is composed of 14 different subunits. Subunits NuoB, C, D, E, F, and G constitute the peripheral sector of the complex. [4Fe-4S] cluster serves as cofactor.

It localises to the cell membrane. The catalysed reaction is a quinone + NADH + 5 H(+)(in) = a quinol + NAD(+) + 4 H(+)(out). Functionally, NDH-1 shuttles electrons from NADH, via FMN and iron-sulfur (Fe-S) centers, to quinones in the respiratory chain. The immediate electron acceptor for the enzyme in this species is believed to be ubiquinone. Couples the redox reaction to proton translocation (for every two electrons transferred, four hydrogen ions are translocated across the cytoplasmic membrane), and thus conserves the redox energy in a proton gradient. This is NADH-quinone oxidoreductase subunit B from Thermomicrobium roseum (strain ATCC 27502 / DSM 5159 / P-2).